Here is a 216-residue protein sequence, read N- to C-terminus: uncharacterized protein (216 aa).

Residues 5 to 25 traverse the membrane as a helical segment; sequence YVKALVAVTVALGVLLPSTIS. Composition is skewed to low complexity over residues 28–67 and 89–108; these read KSFS…SSSS and KASS…ATSK. The tract at residues 28–115 is disordered; that stretch reads KSFSGRSSSS…TSKVTGKTYS (88 aa). Transmembrane regions (helical) follow at residues 137–157 and 183–203; these read GFAP…MFMI and IAWI…IALI.

The protein resides in the cell membrane. This is an uncharacterized protein from Bacillus subtilis (strain 168).